We begin with the raw amino-acid sequence, 555 residues long: MELSVIALLLLGFVNFSWQNEQAPRVKTSLGDIRGYYKISRHGRKYEAYEGIPYAQPPVGNLRFKPPQPVQEWINELPAVEKGPVCTQYVVLSTPQNGDKVTGCEDCLYMNIYVPFRNGNESLLPVMFWIHGGAYQFGSGNKVNETLVMDRDVILVTFNYRLASFGFLSTGDSVVPGNMGLKDQNVALRWVHNHIRSFGGDPNQITIFGLSAGASSVHYHYLSRLSAGLFQRGISISGVALAPWAQTKYAPEKARRYAATLGCPTRNTKEMIDCLQTRPARILSQATGEVPDIYAPFGPVVDKYGPDPFITRSPIDIIVSGEAYDVPWISGVVSEEGLYISAAFVGNDQLLKQLNDDWDNIAPYLLDYNDTLPLNQHKEVAEKIRKYYLGSNPIDSNTSLSVTHMIGDRMFSVDFQKAAILKAKINKSPVWTYYYSYRSMHSCSEIVSGGSTKNFGVSHGDDAFLVLDTRISNVSRPNDLEMQQILLDFYTSFAIEGKPRAGDVQWQTLDPNEKEFQYLHIANPQNIKMETSNDSANINFWNTIDFNENKISGQE.

The first 19 residues, 1–19, serve as a signal peptide directing secretion; sequence MELSVIALLLLGFVNFSWQ. Cysteine 86 and cysteine 107 are oxidised to a cystine. N-linked (GlcNAc...) asparagine glycosylation is found at asparagine 120 and asparagine 144. The active-site Acyl-ester intermediate is the serine 211. Cysteines 263 and 274 form a disulfide. Glutamate 336 (charge relay system) is an active-site residue. N-linked (GlcNAc...) asparagine glycans are attached at residues asparagine 369 and asparagine 397. Histidine 459 acts as the Charge relay system in catalysis. Asparagine 473 and asparagine 533 each carry an N-linked (GlcNAc...) asparagine glycan.

This sequence belongs to the type-B carboxylesterase/lipase family. N-glycosylated. As to expression, expressed in several tissues, including epidermis (at protein level), fat body (at protein level), gut (at protein level), muscle (at protein level), and venom gland (at protein level).

The protein resides in the secreted. The catalysed reaction is a carboxylic ester + H2O = an alcohol + a carboxylate + H(+). Functionally, lipolytic agent that may be involved in distributing the venom via degradation of blood triglycerides. The recombinant protein degrades triglycerides and exhibits high lipolytic activity toward long-chain triglycerides (tested on tributyrin, trioctanoin and triolein). Does not affect mammalian cells. The polypeptide is Carboxylic ester hydrolase (vCaE) (Bombus ignitus (Bumblebee)).